The chain runs to 136 residues: Ribonuclease P protein component (136 aa).

Residues 39–59 (LPDVSSSKPARDTGAEQTSAP) form a disordered region.

This sequence belongs to the RnpA family. In terms of assembly, consists of a catalytic RNA component (M1 or rnpB) and a protein subunit.

It carries out the reaction Endonucleolytic cleavage of RNA, removing 5'-extranucleotides from tRNA precursor.. Its function is as follows. RNaseP catalyzes the removal of the 5'-leader sequence from pre-tRNA to produce the mature 5'-terminus. It can also cleave other RNA substrates such as 4.5S RNA. The protein component plays an auxiliary but essential role in vivo by binding to the 5'-leader sequence and broadening the substrate specificity of the ribozyme. The sequence is that of Ribonuclease P protein component from Salinispora tropica (strain ATCC BAA-916 / DSM 44818 / JCM 13857 / NBRC 105044 / CNB-440).